The primary structure comprises 249 residues: Small ribosomal subunit protein uS2 (249 aa).

Belongs to the universal ribosomal protein uS2 family.

This Polynucleobacter necessarius subsp. necessarius (strain STIR1) protein is Small ribosomal subunit protein uS2.